Consider the following 155-residue polypeptide: Cell division protein SepF (155 aa).

Over residues 22-46 (RYVEEPEQRDERPALEKGRAPKEKQ) the composition is skewed to basic and acidic residues. Residues 22–54 (RYVEEPEQRDERPALEKGRAPKEKQTAGMEQNQ) are disordered.

It belongs to the SepF family. In terms of assembly, homodimer. Interacts with FtsZ.

The protein resides in the cytoplasm. Cell division protein that is part of the divisome complex and is recruited early to the Z-ring. Probably stimulates Z-ring formation, perhaps through the cross-linking of FtsZ protofilaments. Its function overlaps with FtsA. This chain is Cell division protein SepF, found in Shouchella clausii (strain KSM-K16) (Alkalihalobacillus clausii).